Here is a 207-residue protein sequence, read N- to C-terminus: Varv peptide A/Kalata-B1 (207 aa).

The signal sequence occupies residues 1-20 (MKMFIVLVLSAAFALPAAFA). The propeptide occupies 21–66 (TEQDVITLQAYEELLKNGAANGMTKTVISSPVLEEALVSYSKNKLG). The segment at residues 67-95 (GLPVCGETCVGGTCNTPGCSCSWPVCTRN) is a cross-link (cyclopeptide (Gly-Asn)). 3 cysteine pairs are disulfide-bonded: C71-C85, C75-C87, and C80-C92. The propeptide occupies 96-120 (SLESTKSANPLLEEALTAFAKKGLG). Residues 121–149 (GLPVCGETCVGGTCNTPGCTCSWPVCTRN) constitute a cross-link (cyclopeptide (Gly-Asn)). Intrachain disulfides connect C125/C139, C129/C141, and C134/C146. The propeptide occupies 150–174 (ALETQKPNHLLEEALVAFAKKGNLG). Positions 175-203 (GLPVCGETCVGGTCNTPGCSCSWPVCTRN) form a cross-link, cyclopeptide (Gly-Asn). Cystine bridges form between C179/C193, C183/C195, and C188/C200. The propeptide occupies 204-207 (ALAM).

The protein belongs to the cyclotide family. Moebius subfamily. In terms of processing, varv peptide A and kalata-B1 are cyclic peptides.

Its function is as follows. Probably participates in a plant defense mechanism. Has hemolytic activity. This chain is Varv peptide A/Kalata-B1, found in Viola odorata (Sweet violet).